The following is a 49-amino-acid chain: Large ribosomal subunit protein bL33B (49 aa).

The protein belongs to the bacterial ribosomal protein bL33 family.

In Geobacillus kaustophilus (strain HTA426), this protein is Large ribosomal subunit protein bL33B.